The chain runs to 864 residues: Mitochondrial 15S rRNA processing factor CCM1 (864 aa).

A mitochondrion-targeting transit peptide spans 1–76 (MYMARCGPKN…REFSNTLKER (76 aa)). 2 PPR repeats span residues 319 to 353 (NKQN…STKH) and 356 to 390 (DICT…NIKP).

This sequence belongs to the CCM1 family. Binds to mitochondrial small subunit 15S rRNA.

Its subcellular location is the mitochondrion. Its function is as follows. Regulates mitochondrial small subunit maturation by controlling 15S rRNA 5'-end processing. Localizes to the 5' precursor of the 15S rRNA in a position that is subsequently occupied by mS47 in the mature yeast mtSSU. Uses structure and sequence-specific RNA recognition, binding to a single-stranded region of the precursor and specifically recognizing bases -6 to -1. The exchange of Ccm1 for mS47 is coupled to the irreversible removal of precursor rRNA that is accompanied by conformational changes of the mitoribosomal proteins uS5m and mS26. These conformational changes signal completion of 5'-end rRNA processing through protection of the mature 5'-end of the 15S rRNA and stabilization of mS47. The removal of the 5' precursor together with the dissociation of Ccm1 may be catalyzed by the 5'-3' exoribonuclease Pet127. Involved in the specific removal of group I introns in mitochondrial encoded transcripts. The sequence is that of Mitochondrial 15S rRNA processing factor CCM1 (CCM1) from Saccharomyces cerevisiae (strain YJM789) (Baker's yeast).